The following is a 105-amino-acid chain: Nucleoid-associated protein Ccur92_18190 (105 aa).

This sequence belongs to the YbaB/EbfC family. As to quaternary structure, homodimer.

Its subcellular location is the cytoplasm. The protein localises to the nucleoid. Functionally, binds to DNA and alters its conformation. May be involved in regulation of gene expression, nucleoid organization and DNA protection. This Campylobacter curvus (strain 525.92) protein is Nucleoid-associated protein Ccur92_18190.